The primary structure comprises 190 residues: Ribosome maturation factor RimM (190 aa).

Positions 95-177 (EDDEFFYTDL…AGLIDSPDDL (83 aa)) constitute a PRC barrel domain. Positions 170-190 (LIDSPDDLTGKPPKPPGKTKE) are disordered. The span at 181–190 (PPKPPGKTKE) shows a compositional bias: pro residues.

It belongs to the RimM family. Binds ribosomal protein uS19.

It localises to the cytoplasm. An accessory protein needed during the final step in the assembly of 30S ribosomal subunit, possibly for assembly of the head region. Essential for efficient processing of 16S rRNA. May be needed both before and after RbfA during the maturation of 16S rRNA. It has affinity for free ribosomal 30S subunits but not for 70S ribosomes. The chain is Ribosome maturation factor RimM from Rhizobium rhizogenes (strain K84 / ATCC BAA-868) (Agrobacterium radiobacter).